Reading from the N-terminus, the 418-residue chain is Voltage-gated ClC-type chloride channel ClcB (418 aa).

10 helical membrane-spanning segments follow: residues 5–25 (LLIA…FRHA), 54–74 (LLTP…WQKF), 146–166 (LWIA…PLAG), 168–188 (LFIA…PVII), 222–242 (ALII…LTLM), 258–278 (WQLA…PAVW), 291–311 (APPL…AVLA), 316–336 (GAPG…GMLY), 352–372 (LLLG…APIM), and 380–400 (MTGE…ASVI).

Belongs to the chloride channel (TC 2.A.49) family. ClcB subfamily.

It localises to the cell inner membrane. In terms of biological role, probably acts as an electrical shunt for an outwardly-directed proton pump that is linked to amino acid decarboxylation, as part of the extreme acid resistance (XAR) response. The sequence is that of Voltage-gated ClC-type chloride channel ClcB from Escherichia coli O127:H6 (strain E2348/69 / EPEC).